The sequence spans 1427 residues: DNA-directed RNA polymerase subunit beta' (1427 aa).

Residues Cys-70, Cys-72, Cys-85, and Cys-88 each contribute to the Zn(2+) site. Residues Asp-461, Asp-463, and Asp-465 each contribute to the Mg(2+) site. Residues Cys-838, Cys-912, Cys-919, and Cys-922 each coordinate Zn(2+).

This sequence belongs to the RNA polymerase beta' chain family. As to quaternary structure, the RNAP catalytic core consists of 2 alpha, 1 beta, 1 beta' and 1 omega subunit. When a sigma factor is associated with the core the holoenzyme is formed, which can initiate transcription. Requires Mg(2+) as cofactor. Zn(2+) serves as cofactor.

It carries out the reaction RNA(n) + a ribonucleoside 5'-triphosphate = RNA(n+1) + diphosphate. In terms of biological role, DNA-dependent RNA polymerase catalyzes the transcription of DNA into RNA using the four ribonucleoside triphosphates as substrates. The protein is DNA-directed RNA polymerase subunit beta' of Sorangium cellulosum (strain So ce56) (Polyangium cellulosum (strain So ce56)).